We begin with the raw amino-acid sequence, 561 residues long: Dihydroxy-acid dehydratase (561 aa).

C50 is a binding site for [2Fe-2S] cluster. D82 serves as a coordination point for Mg(2+). C123 contacts [2Fe-2S] cluster. Positions 124 and 125 each coordinate Mg(2+). K125 carries the post-translational modification N6-carboxylysine. C195 serves as a coordination point for [2Fe-2S] cluster. E447 contributes to the Mg(2+) binding site. S473 acts as the Proton acceptor in catalysis.

The protein belongs to the IlvD/Edd family. As to quaternary structure, homodimer. Requires [2Fe-2S] cluster as cofactor. It depends on Mg(2+) as a cofactor.

The enzyme catalyses (2R)-2,3-dihydroxy-3-methylbutanoate = 3-methyl-2-oxobutanoate + H2O. It catalyses the reaction (2R,3R)-2,3-dihydroxy-3-methylpentanoate = (S)-3-methyl-2-oxopentanoate + H2O. It functions in the pathway amino-acid biosynthesis; L-isoleucine biosynthesis; L-isoleucine from 2-oxobutanoate: step 3/4. Its pathway is amino-acid biosynthesis; L-valine biosynthesis; L-valine from pyruvate: step 3/4. Functions in the biosynthesis of branched-chain amino acids. Catalyzes the dehydration of (2R,3R)-2,3-dihydroxy-3-methylpentanoate (2,3-dihydroxy-3-methylvalerate) into 2-oxo-3-methylpentanoate (2-oxo-3-methylvalerate) and of (2R)-2,3-dihydroxy-3-methylbutanoate (2,3-dihydroxyisovalerate) into 2-oxo-3-methylbutanoate (2-oxoisovalerate), the penultimate precursor to L-isoleucine and L-valine, respectively. In Microcystis aeruginosa (strain NIES-843 / IAM M-2473), this protein is Dihydroxy-acid dehydratase.